We begin with the raw amino-acid sequence, 140 residues long: uncharacterized protein (140 aa).

This is an uncharacterized protein from Saccharomyces cerevisiae (strain ATCC 204508 / S288c) (Baker's yeast).